We begin with the raw amino-acid sequence, 382 residues long: MYDLKIYSSYIVAAIKDKIVFFSTDGAVLHTITVEQKAPVKDTDAGNEPNGNQTQPTPANVVTFEYCPTAKVLAVSLSDKTWRRYQLREEDGGKLCSAPLGEDITTARTIVSMKFVPKHGVLFGTDKSDCFEFGALDKTSEPQPKWILGHMSQILALAVSDDERFIVTSDRDEKIKVSSYPDCHNIECFCLGHTEYVGGIEIIPSEKLISVSGDRTLRLWDVTEGKELSKLSLKEPALDFTVQKVAEGCGMLCAVRSYVQNMVEVALVSYDKPDASELYDPLTIDESLIILNAGLSASLRLMLLTMEKESKRVRMLVYEFCAEKRAFKACDDHPFVKNFEDQFKDVTIEQVRDYSTLFKHTIDNLTEYFERKKIKMESKKSK.

Residues 40–59 are disordered; it reads VKDTDAGNEPNGNQTQPTPA. The segment covering 49 to 59 has biased composition (polar residues); sequence PNGNQTQPTPA. WD repeat units lie at residues 149 to 190 and 192 to 230; these read GHMS…ECFC and GHTE…ELSK.

Belongs to the WD repeat TRM82 family. In terms of assembly, forms a heterodimer with the catalytic subunit.

Its subcellular location is the nucleus. The protein operates within tRNA modification; N(7)-methylguanine-tRNA biosynthesis. Functionally, required for the formation of N(7)-methylguanine at position 46 (m7G46) in tRNA. In the complex, it is required to stabilize and induce conformational changes of the catalytic subunit. This Anopheles gambiae (African malaria mosquito) protein is tRNA (guanine-N(7)-)-methyltransferase non-catalytic subunit wuho.